We begin with the raw amino-acid sequence, 463 residues long: Aurantioclavine synthase cnsA (463 aa).

An FAD-binding PCMH-type domain is found at 16–199; the sequence is ERFNQRGNVF…TQATVRVFPD (184 aa).

This sequence belongs to the oxygen-dependent FAD-linked oxidoreductase family. The cofactor is FAD.

It functions in the pathway alkaloid biosynthesis. Functionally, FAD-linked oxidoreductase; part of the gene cluster that mediates the biosynthesis of communesins, a prominent class of indole alkaloids with great potential as pharmaceuticals. Communesins are biosynthesized by the coupling of tryptamine and aurantioclavine, two building blocks derived from L-tryptophan. The L-tryptophan decarboxylase cnsB converts L-tryptophan to tryptamine, whereas the tryptophan dimethylallyltransferase cnsF converts L-tryptophan to 4-dimethylallyl tryptophan which is further transformed to aurantioclavine by the aurantioclavine synthase cnsA, probably aided by the catalase cnsD. The cytochrome P450 monooxygenase cnsC catalyzes the heterodimeric coupling between the two different indole moieties, tryptamine and aurantioclavine, to construct vicinal quaternary stereocenters and yield the heptacyclic communesin scaffold. The O-methyltransferase cnsE then methylates the communesin scaffold to produce communesin K, the simplest characterized communesin that contains the heptacyclic core. The dioxygenase cnsJ converts communesin K into communesin I. Acylation to introduce the hexadienyl group at position N16 of communesin I by the acyltransferase cnsK leads to the production of communesin B. The hexadienyl group is produced by the highly reducing polyketide synthase cnsI, before being hydrolytically removed from cnsI by the serine hydrolase cnsH, converted into hexadienyl-CoA by the CoA ligase cnsG, and then transferred to communesin I by cnsK. Surprisingly, cnsK may also be a promiscuous acyltransferase that can tolerate a range of acyl groups, including acetyl-, propionyl-, and butyryl-CoA, which lead to communesins A, G and H respectively. The roles of the alpha-ketoglutarate-dependent dioxygenases cnsM and cnsP have still to be determined. This Penicillium expansum (Blue mold rot fungus) protein is Aurantioclavine synthase cnsA.